Consider the following 117-residue polypeptide: Ribulose bisphosphate carboxylase small subunit 1 (117 aa).

It belongs to the RuBisCO small chain family. In terms of assembly, heterohexadecamer of 8 large and 8 small subunits.

Its function is as follows. RuBisCO catalyzes two reactions: the carboxylation of D-ribulose 1,5-bisphosphate, the primary event in carbon dioxide fixation, as well as the oxidative fragmentation of the pentose substrate. Both reactions occur simultaneously and in competition at the same active site. Although the small subunit is not catalytic it is essential for maximal activity. The polypeptide is Ribulose bisphosphate carboxylase small subunit 1 (Hydrogenovibrio marinus).